Consider the following 365-residue polypeptide: Transmembrane protein 25 (365 aa).

Positions 1-26 (MELPLSQATLRHTLLLLPALLSSGQG) are cleaved as a signal peptide. The Extracellular portion of the chain corresponds to 27 to 232 (ELAPQIDGQT…APGLLATRIE (206 aa)). Residues 30–123 (PQIDGQTWAE…SGRPANASVI (94 aa)) form the Ig-like domain. Cysteines 52 and 107 form a disulfide. N-linked (GlcNAc...) asparagine glycans are attached at residues N106, N162, N192, and N205. A helical membrane pass occupies residues 233 to 253 (VPLLGIVVAGGLALGTLVGFS). Residues 254–365 (TLVACLVCRK…SSVSSDEIWL (112 aa)) are Cytoplasmic-facing.

In terms of assembly, interacts with GRIN2B. Expressed throughout the brain with higher levels within the hippocampus.

It is found in the late endosome. The protein resides in the lysosome. It localises to the cell membrane. The protein localises to the secreted. In neurons, modulates the degradation of NMDA receptor GRIN2B subunit. Plays a role in the regulation of neuronal excitability. This Mus musculus (Mouse) protein is Transmembrane protein 25.